A 493-amino-acid polypeptide reads, in one-letter code: Lysine--tRNA ligase (493 aa).

Positions 402 and 409 each coordinate Mg(2+).

It belongs to the class-II aminoacyl-tRNA synthetase family. As to quaternary structure, homodimer. Requires Mg(2+) as cofactor.

The protein localises to the cytoplasm. The catalysed reaction is tRNA(Lys) + L-lysine + ATP = L-lysyl-tRNA(Lys) + AMP + diphosphate. This Ureaplasma urealyticum serovar 10 (strain ATCC 33699 / Western) protein is Lysine--tRNA ligase.